Reading from the N-terminus, the 435-residue chain is Gamma-glutamyl phosphate reductase (435 aa).

The protein belongs to the gamma-glutamyl phosphate reductase family.

It is found in the cytoplasm. It catalyses the reaction L-glutamate 5-semialdehyde + phosphate + NADP(+) = L-glutamyl 5-phosphate + NADPH + H(+). Its pathway is amino-acid biosynthesis; L-proline biosynthesis; L-glutamate 5-semialdehyde from L-glutamate: step 2/2. In terms of biological role, catalyzes the NADPH-dependent reduction of L-glutamate 5-phosphate into L-glutamate 5-semialdehyde and phosphate. The product spontaneously undergoes cyclization to form 1-pyrroline-5-carboxylate. The polypeptide is Gamma-glutamyl phosphate reductase (Synechococcus sp. (strain WH7803)).